The sequence spans 159 residues: Photosystem I reaction center subunit XI (159 aa).

3 helical membrane passes run 53-73 (LEIG…LGPL), 84-104 (LISG…YGIV), and 125-145 (FTAG…TLLE).

This sequence belongs to the PsaL family.

Its subcellular location is the cellular thylakoid membrane. This Cyanothece sp. (strain PCC 7425 / ATCC 29141) protein is Photosystem I reaction center subunit XI.